A 136-amino-acid polypeptide reads, in one-letter code: ATP synthase epsilon chain, chloroplastic (136 aa).

It belongs to the ATPase epsilon chain family. F-type ATPases have 2 components, CF(1) - the catalytic core - and CF(0) - the membrane proton channel. CF(1) has five subunits: alpha(3), beta(3), gamma(1), delta(1), epsilon(1). CF(0) has three main subunits: a, b and c.

It localises to the plastid. The protein localises to the chloroplast thylakoid membrane. In terms of biological role, produces ATP from ADP in the presence of a proton gradient across the membrane. The protein is ATP synthase epsilon chain, chloroplastic of Cucumis sativus (Cucumber).